A 253-amino-acid chain; its full sequence is FGFR1 oncogene partner 2 (253 aa).

Residues 5–104 (IEKALADAKA…SALELIMSKY (100 aa)) are a coiled coil. S141 is modified (phosphoserine). Positions 160–223 (LERRHLEANQ…LREILQITRE (64 aa)) form a coiled coil. Residues 231-253 (DDASESTSLSALVTNSDLSLRKS) form a disordered region. Over residues 235-253 (ESTSLSALVTNSDLSLRKS) the composition is skewed to polar residues.

Belongs to the SIKE family. As to expression, expressed in bone marrow, spleen and thymus.

The protein resides in the cytoplasm. In terms of biological role, may be involved in wound healing pathway. The sequence is that of FGFR1 oncogene partner 2 (FGFR1OP2) from Homo sapiens (Human).